A 138-amino-acid polypeptide reads, in one-letter code: MGLNIRVIAPDRIVWNAKAEEVILPTSTGQLGILSGHAPLLTALDIGVMRVRITNTWTSIVLFGGFAEVENDEILILVNGAEEASVINLDKANKELIESSSLLNEAKTNKEKFEATQKLRKAKARVQAANTLTNQSIY.

Belongs to the ATPase epsilon chain family. As to quaternary structure, F-type ATPases have 2 components, CF(1) - the catalytic core - and CF(0) - the membrane proton channel. CF(1) has five subunits: alpha(3), beta(3), gamma(1), delta(1), epsilon(1). CF(0) has three main subunits: a, b and c.

Its subcellular location is the plastid. The protein resides in the chloroplast thylakoid membrane. In terms of biological role, produces ATP from ADP in the presence of a proton gradient across the membrane. In Galdieria sulphuraria (Red alga), this protein is ATP synthase epsilon chain, chloroplastic.